The following is a 119-amino-acid chain: Odin profilin (119 aa).

It belongs to the Asgard profilin family.

It localises to the cytoplasm. It is found in the cytoskeleton. Inhibition of rabbit actin polymerization is reduced by phosphatidylinositol-(4,5)-P2(1,2-dipalmitoyl), a soluble form of the phospholipid phosphatidylinositol, suggesting an unknown lipid might regulate actin-profilin interaction in vivo. Its function is as follows. Binds to actin and affects the structure of the cytoskeleton. At high concentrations inhibits spontaneous rabbit actin nucleation. This strongly suggests this archaea has a profilin-regulated actin system, and actin-type genes can be identified in this organism. This is Odin profilin from Odinarchaeota yellowstonii (strain LCB_4).